The sequence spans 122 residues: Large ribosomal subunit protein uL14 (122 aa).

Belongs to the universal ribosomal protein uL14 family. In terms of assembly, part of the 50S ribosomal subunit. Forms a cluster with proteins L3 and L19. In the 70S ribosome, L14 and L19 interact and together make contacts with the 16S rRNA in bridges B5 and B8.

Its function is as follows. Binds to 23S rRNA. Forms part of two intersubunit bridges in the 70S ribosome. This chain is Large ribosomal subunit protein uL14, found in Bacillus pumilus (strain SAFR-032).